The following is a 1039-amino-acid chain: MFNNNNNDKINNTMMSNNPSGQIINLESIDCNSNLSNTTSIKDSNNNNNNNNNNNNNINNNINKINPNIDRKVLDDFNSKSIKIIDNKLNKKNSKKNLYSKEVDDDINKINLNKKIIPNETNSNNSNNNNNNSNNNNNNNNNNNNFNYNNNINSNNNIINNNNNINNNSNNNNNNNNNNSISLYVDTQEKSKKKVNAESLRGPIIFQNFILYTFFLIVIGTAEGTSWAPEIRVANFVPYCVMCVVLLEFNRLHKKPLLRIIFPLYTSNIPFAYMCIFSREARKYVLISLLFFASCLCIFLQSGIPDLRKHIVIFCIIFMINYGCCILFMDWFYIDTTGTKPYRGRILATKIHWGEEATILVSMALLGCIFIVLEKFIKSYARCVAEQHYQIQCLQKEKEKLQTEINISLKKLDLDTPIEKIMDILRSMINTSESENDKKQLIKVIAVLGSNKLYDPDFKFETCTDDAEVYSWLQSMLNREVGYSNVNNNNNMMMIENNNNNTIINNNLIEPTSPNFSKKLTSSDLIPRIRSMPEITDQGIQELIINNFLEWDFPVFQLSEITDGNPLFYMSYFLFSRHKFFEKFKIGIDCFKNFMRKIESGYDSTNPYHNSIHATDVLHNLNYFIEKSFGKFLTDIELFSMILAAIIHDFKHPGVNNHFQINSKSRLALKYNDKSILENYHLHQAFIIMNEPESGILLKLSDSVRKEIRETIIALVLSTDMAKHFNLVGRFKSMANSFPTTTNTQQPSSSSSSSSSTTIPTSTITPTPNSTTSTTTTTTTTTTTTNNNNNNNSNNNSLNNIINNCSSSNGSMGASGADNSNSNNTNNSNSNNQNQCGSSIFLNSNKKDRLLLMKISIKCADISNPSKPWNLYTNWSNRVTSEFYKQGDKEKESNMDVSAFMDRNKPATTKCQINFINIFVAPIYEIWSHHFPQFKLCYQNILSNLSRLEIEQQQQLQLQQQQQQQLQQQQQQQQQIHQQQQQQLHHHQQQQQFQHQQHQQQLQHQHQQQLNNQNQNQNQSNSNNSNSFGLTQSNYLIVV.

An N-terminal signal peptide occupies residues 1–29 (MFNNNNNDKINNTMMSNNPSGQIINLESI). N11, N34, and N37 each carry an N-linked (GlcNAc...) asparagine glycan. Over 30–201 (DCNSNLSNTT…KKKVNAESLR (172 aa)) the chain is Extracellular. 2 disordered regions span residues 40-63 (SIKD…NNIN) and 116-181 (IIPN…NNSI). Residues 45-63 (NNNNNNNNNNNNNINNNIN) show a composition bias toward low complexity. N119, N124, N131, N167, and N178 each carry an N-linked (GlcNAc...) asparagine glycan. The chain crosses the membrane as a helical span at residues 202 to 222 (GPIIFQNFILYTFFLIVIGTA). At 223-226 (EGTS) the chain is on the cytoplasmic side. The helical transmembrane segment at 227–247 (WAPEIRVANFVPYCVMCVVLL) threads the bilayer. The Extracellular segment spans residues 248-256 (EFNRLHKKP). A helical membrane pass occupies residues 257 to 277 (LLRIIFPLYTSNIPFAYMCIF). Topologically, residues 278-283 (SREARK) are cytoplasmic. Residues 284–304 (YVLISLLFFASCLCIFLQSGI) form a helical membrane-spanning segment. The Extracellular segment spans residues 305-310 (PDLRKH). A helical membrane pass occupies residues 311 to 331 (IVIFCIIFMINYGCCILFMDW). Over 332–356 (FYIDTTGTKPYRGRILATKIHWGEE) the chain is Cytoplasmic. Residues 357–377 (ATILVSMALLGCIFIVLEKFI) form a helical membrane-spanning segment. Residues 378–1039 (KSYARCVAEQ…LTQSNYLIVV (662 aa)) are Extracellular-facing. Positions 384 to 414 (VAEQHYQIQCLQKEKEKLQTEINISLKKLDL) form a coiled coil. N-linked (GlcNAc...) asparagine glycans are attached at residues N406, N430, N500, and N515. Positions 533-973 (PEITDQGIQE…QQLQQQQQQQ (441 aa)) constitute a PDEase domain. Residue H609 is the Proton donor of the active site. H613, H648, and D649 together coordinate a divalent metal cation. Positions 738 to 835 (FPTTTNTQQP…NNSNSNNQNQ (98 aa)) are disordered. Low complexity predominate over residues 740 to 835 (TTTNTQQPSS…NNSNSNNQNQ (96 aa)). N-linked (GlcNAc...) asparagine glycans are attached at residues N769, N791, N795, N804, N809, N823, and N826. Residue D861 participates in a divalent metal cation binding. 4 N-linked (GlcNAc...) asparagine glycosylation sites follow: N874, N944, N1018, and N1023. A compositionally biased stretch (low complexity) spans 978-1019 (QQQQQQLHHHQQQQQFQHQQHQQQLQHQHQQQLNNQNQNQNQ). The disordered stretch occupies residues 978 to 1033 (QQQQQQLHHHQQQQQFQHQQHQQQLQHQHQQQLNNQNQNQNQSNSNNSNSFGLTQS). Residues 1020-1033 (SNSNNSNSFGLTQS) show a composition bias toward polar residues.

This sequence belongs to the cyclic nucleotide phosphodiesterase family. The cofactor is a divalent metal cation.

It localises to the cell membrane. The enzyme catalyses 3',5'-cyclic AMP + H2O = AMP + H(+). Inhibited by 3-isobutyl-1-methylxanthine (IBMX). Its function is as follows. Phosphodiesterase specific for extracellular cAMP. Involved in the degradation of extracellular cAMP specifically during multicellular development. The sequence is that of 3',5'-cyclic-AMP phosphodiesterase 4 (Pde4) from Dictyostelium discoideum (Social amoeba).